The following is a 73-amino-acid chain: Omega-hexatoxin-Ar1b (73 aa).

A signal peptide spans 1-22; it reads MNTATGFIVLLVLATVLGCIEA. Positions 23-37 are excised as a propeptide; the sequence is GESHVREDAMGRARR. Cystine bridges form between Cys40–Cys54, Cys47–Cys58, and Cys53–Cys72.

Belongs to the neurotoxin 08 (Shiva) family. 01 (omega toxin) subfamily. In terms of tissue distribution, expressed by the venom gland.

It localises to the secreted. In terms of biological role, insecticidal toxin that reversibly and voltage-independently blocks both mid-low- (M-LVA) and high-voltage-activated (HVA) calcium channels (Cav) in cockroach DUM neurons. Also causes a modest block of insect sodium channel currents (Nav). Induces potent excitatory symptoms, followed by flaccid paralysis leading to death in house crickets. This is Omega-hexatoxin-Ar1b from Atrax robustus (Sydney funnel-web spider).